The following is a 585-amino-acid chain: Nucleus accumbens-associated protein 2 (585 aa).

In terms of domain architecture, BTB spans 30-94; it reads CDVSIVVKGQ…CYTGKLTMAA (65 aa). Residues lysine 171 and lysine 215 each participate in a glycyl lysine isopeptide (Lys-Gly) (interchain with G-Cter in SUMO2) cross-link. Residues 238–261 are compositionally biased toward polar residues; the sequence is PYPQGERTSPGASSLPTTDSSTSY. The interval 238–269 is disordered; sequence PYPQGERTSPGASSLPTTDSSTSYHNEDEDDD. Glycyl lysine isopeptide (Lys-Gly) (interchain with G-Cter in SUMO2) cross-links involve residues lysine 296, lysine 426, and lysine 453. The 98-residue stretch at 348–445 folds into the BEN domain; that stretch reads GSGVYITRGQ…DMCTNARRVR (98 aa). The segment at 541 to 585 is disordered; it reads APEQLPADGQSSPQAFEQGNTSSSRPQTPVATATRRPEGTYAGTL. Polar residues predominate over residues 549–571; that stretch reads GQSSPQAFEQGNTSSSRPQTPVA.

As to quaternary structure, homooligomer; mediated by the BTB domain. Interacts with the NuRD complex. Interacts (via C-terminal part) with HDAC2. Interacts (via BTB domain) with MTA1, MTA2 and MTA3.

It is found in the nucleus. In terms of biological role, functions as a transcriptional repressor through its association with the NuRD complex. Recruits the NuRD complex to the promoter of MDM2, leading to the repression of MDM2 transcription and subsequent stability of p53/TP53. The sequence is that of Nucleus accumbens-associated protein 2 (Nacc2) from Rattus norvegicus (Rat).